The sequence spans 395 residues: S-adenosylmethionine synthase (395 aa).

H15 is a binding site for ATP. Position 17 (D17) interacts with Mg(2+). E43 contributes to the K(+) binding site. Residues E56 and Q99 each contribute to the L-methionine site. Positions 99–109 (QSPEIAQGVDR) are flexible loop. Residues 164–166 (DAK), 230–231 (RF), D239, 245–246 (RK), A262, and K266 each bind ATP. Residue D239 coordinates L-methionine. K270 serves as a coordination point for L-methionine.

It belongs to the AdoMet synthase family. In terms of assembly, homotetramer; dimer of dimers. Requires Mg(2+) as cofactor. K(+) serves as cofactor.

The protein localises to the cytoplasm. It catalyses the reaction L-methionine + ATP + H2O = S-adenosyl-L-methionine + phosphate + diphosphate. Its pathway is amino-acid biosynthesis; S-adenosyl-L-methionine biosynthesis; S-adenosyl-L-methionine from L-methionine: step 1/1. In terms of biological role, catalyzes the formation of S-adenosylmethionine (AdoMet) from methionine and ATP. The overall synthetic reaction is composed of two sequential steps, AdoMet formation and the subsequent tripolyphosphate hydrolysis which occurs prior to release of AdoMet from the enzyme. This Colwellia psychrerythraea (strain 34H / ATCC BAA-681) (Vibrio psychroerythus) protein is S-adenosylmethionine synthase.